Consider the following 123-residue polypeptide: T-complex protein 1 subunit alpha (123 aa).

Gly68 lines the ADP pocket.

The protein belongs to the TCP-1 chaperonin family. As to quaternary structure, component of the chaperonin-containing T-complex (TRiC), a hexadecamer composed of two identical back-to-back stacked rings enclosing a protein folding chamber. Each ring is made up of eight different subunits: TCP1/CCT1, CCT2, CCT3, CCT4, CCT5, CCT6A/CCT6, CCT7, CCT8. Interacts with PACRG. Interacts with GBA1. Interacts with DLEC1.

Its subcellular location is the cytoplasm. It localises to the cytosol. It is found in the cytoskeleton. The protein localises to the microtubule organizing center. The protein resides in the centrosome. It carries out the reaction ATP + H2O = ADP + phosphate + H(+). Functionally, component of the chaperonin-containing T-complex (TRiC), a molecular chaperone complex that assists the folding of actin, tubulin and other proteins upon ATP hydrolysis. The TRiC complex mediates the folding of WRAP53/TCAB1, thereby regulating telomere maintenance. As part of the TRiC complex may play a role in the assembly of BBSome, a complex involved in ciliogenesis regulating transports vesicles to the cilia. This chain is T-complex protein 1 subunit alpha, found in Mesocricetus auratus (Golden hamster).